The primary structure comprises 852 residues: Carbohydrate-responsive element-binding protein (852 aa).

The segment covering 1–12 (MAGALAGLAAGL) has biased composition (low complexity). Disordered stretches follow at residues 1–36 (MAGA…SLRR) and 54–80 (VSSP…FGPR). Phosphoserine is present on residues serine 20, serine 23, and serine 25. Threonine 27 carries the post-translational modification Phosphothreonine. Position 29 is a phosphoserine (serine 29). Residue serine 196 is modified to Phosphoserine. Disordered stretches follow at residues 328–365 (DSLF…CPGP), 486–527 (PCFS…NNPC), and 548–648 (STLL…NKTE). Residues 505 to 521 (ASPPTLAPATASPPTTA) are compositionally biased toward low complexity. Residues 548-559 (STLLRSPGSPQE) are compositionally biased toward polar residues. Phosphoserine; by AMPK is present on serine 556. Residues 568–584 (FLPPTPAPTPPRPPPGP) show a composition bias toward pro residues. 3 positions are modified to phosphoserine: serine 602, serine 614, and serine 631. A bHLH domain is found at 649 to 703 (NRRITHISAEQKRRFNIKLGFDTLHGLVSTLSAQPSLKVSKATTLQKTAEYILML). Residues 703 to 724 (LQQERAGLQEEAQQLRDEIEEL) form a leucine-zipper region.

Binds DNA as a heterodimer with MLX/TCFL4. Phosphorylation at Ser-556 by AMPK inactivates the DNA-binding activity. As to expression, expressed in liver, heart, kidney, cerebellum and intestinal tissues.

The protein localises to the nucleus. Its function is as follows. Binds DNA as a heterodimer with MLX/TCFL4 and activates transcription. Binds to the canonical E box sequence 5'-CACGTG-3'. Plays a role in transcriptional activation of glycolytic target genes. Involved in glucose-responsive gene regulation. Regulates transcription in response to changes in cellular carbohydrate abundance such as occurs during fasting to feeding metabolic transition. Refeeding stimulates MLXIPL/ChREBP transcription factor, leading to increased BCKDK to PPM1K expression ratio, phosphorylation and activation of ACLY that ultimately results in the generation of malonyl-CoA and oxaloacetate immediate substrates of de novo lipogenesis and gluconeogenesis, respectively. The protein is Carbohydrate-responsive element-binding protein (MLXIPL) of Homo sapiens (Human).